A 345-amino-acid polypeptide reads, in one-letter code: N-acetyl-gamma-glutamyl-phosphate reductase (345 aa).

Cysteine 153 is an active-site residue.

Belongs to the NAGSA dehydrogenase family. Type 1 subfamily.

It localises to the cytoplasm. The catalysed reaction is N-acetyl-L-glutamate 5-semialdehyde + phosphate + NADP(+) = N-acetyl-L-glutamyl 5-phosphate + NADPH + H(+). The protein operates within amino-acid biosynthesis; L-arginine biosynthesis; N(2)-acetyl-L-ornithine from L-glutamate: step 3/4. Catalyzes the NADPH-dependent reduction of N-acetyl-5-glutamyl phosphate to yield N-acetyl-L-glutamate 5-semialdehyde. The protein is N-acetyl-gamma-glutamyl-phosphate reductase of Methylacidiphilum infernorum (isolate V4) (Methylokorus infernorum (strain V4)).